The following is an 89-amino-acid chain: Small ribosomal subunit protein uS15 (89 aa).

The protein belongs to the universal ribosomal protein uS15 family. As to quaternary structure, part of the 30S ribosomal subunit. Forms a bridge to the 50S subunit in the 70S ribosome, contacting the 23S rRNA.

Its function is as follows. One of the primary rRNA binding proteins, it binds directly to 16S rRNA where it helps nucleate assembly of the platform of the 30S subunit by binding and bridging several RNA helices of the 16S rRNA. Forms an intersubunit bridge (bridge B4) with the 23S rRNA of the 50S subunit in the ribosome. The sequence is that of Small ribosomal subunit protein uS15 from Beutenbergia cavernae (strain ATCC BAA-8 / DSM 12333 / CCUG 43141 / JCM 11478 / NBRC 16432 / NCIMB 13614 / HKI 0122).